A 504-amino-acid chain; its full sequence is Maturase K (504 aa).

This sequence belongs to the intron maturase 2 family. MatK subfamily.

The protein localises to the plastid. The protein resides in the chloroplast. In terms of biological role, usually encoded in the trnK tRNA gene intron. Probably assists in splicing its own and other chloroplast group II introns. This chain is Maturase K, found in Quercus cerris (Turkey oak).